The following is a 155-amino-acid chain: MSRRGTAEEKTPKSDPIYRNRLVNMLVNRIMKHGKKSLAYQIIYRAVKKIQQKTETNPLSVLRQAIRGVTPDIAVKARRVGGSTHQVPIEIGSTQGKALAIRWLLGASRKRPGRNMAFKLSSELVDAAKGSGDAIRKKEETHRMAEANRAFAHFR.

It belongs to the universal ribosomal protein uS7 family. Part of the 30S ribosomal subunit.

Its subcellular location is the plastid. The protein localises to the chloroplast. Its function is as follows. One of the primary rRNA binding proteins, it binds directly to 16S rRNA where it nucleates assembly of the head domain of the 30S subunit. The sequence is that of Small ribosomal subunit protein uS7c (rps7) from Ananas comosus (Pineapple).